A 106-amino-acid polypeptide reads, in one-letter code: Large ribosomal subunit protein uL24 (106 aa).

It belongs to the universal ribosomal protein uL24 family. As to quaternary structure, part of the 50S ribosomal subunit.

In terms of biological role, one of two assembly initiator proteins, it binds directly to the 5'-end of the 23S rRNA, where it nucleates assembly of the 50S subunit. Functionally, one of the proteins that surrounds the polypeptide exit tunnel on the outside of the subunit. This is Large ribosomal subunit protein uL24 from Marinobacter nauticus (strain ATCC 700491 / DSM 11845 / VT8) (Marinobacter aquaeolei).